The chain runs to 811 residues: E3 ubiquitin-protein ligase RNF10 (811 aa).

The span at M1–A10 shows a compositional bias: polar residues. A disordered region spans residues M1–V119. A Phosphoserine modification is found at S5. Low complexity-rich tracts occupy residues N18–S31, N78–K90, and S104–G113. Residues G101 to N185 form an interaction with MEOX2 region. 2 positions are modified to phosphoserine: S110 and S128. The segment at C225–Y267 adopts an RING-type zinc-finger fold. Polar residues predominate over residues D653–E662. Disordered regions lie at residues D653–L672, D724–F761, and L776–K811. Positions D724–N736 are enriched in basic and acidic residues. Polar residues predominate over residues L802–K811.

This sequence belongs to the RNF10 family. In terms of assembly, interacts with MEOX2.

It is found in the cytoplasm. Its subcellular location is the nucleus. The enzyme catalyses S-ubiquitinyl-[E2 ubiquitin-conjugating enzyme]-L-cysteine + [acceptor protein]-L-lysine = [E2 ubiquitin-conjugating enzyme]-L-cysteine + N(6)-ubiquitinyl-[acceptor protein]-L-lysine.. It participates in protein modification; protein ubiquitination. Functionally, E3 ubiquitin-protein ligase that catalyzes monoubiquitination of 40S ribosomal proteins RPS2/us5 and RPS3/us3 in response to ribosome stalling. Part of a ribosome quality control that takes place when ribosomes have stalled during translation initiation (iRQC): RNF10 acts by mediating monoubiquitination of RPS2/us5 and RPS3/us3, promoting their degradation by the proteasome. Also promotes ubiquitination of 40S ribosomal proteins in response to ribosome stalling during translation elongation. The action of RNF10 in iRQC is counteracted by USP10. May also act as a transcriptional factor involved in the regulation of MAG (Myelin-associated glycoprotein) expression. Acts as a regulator of Schwann cell differentiation and myelination. The protein is E3 ubiquitin-protein ligase RNF10 of Homo sapiens (Human).